The chain runs to 156 residues: 6,7-dimethyl-8-ribityllumazine synthase (156 aa).

Residues F23, 57-59, and 81-83 each bind 5-amino-6-(D-ribitylamino)uracil; these read AYE and AII. 86–87 is a (2S)-2-hydroxy-3-oxobutyl phosphate binding site; sequence GT. The active-site Proton donor is H89. Residue F114 coordinates 5-amino-6-(D-ribitylamino)uracil. R128 contacts (2S)-2-hydroxy-3-oxobutyl phosphate.

Belongs to the DMRL synthase family.

The catalysed reaction is (2S)-2-hydroxy-3-oxobutyl phosphate + 5-amino-6-(D-ribitylamino)uracil = 6,7-dimethyl-8-(1-D-ribityl)lumazine + phosphate + 2 H2O + H(+). It functions in the pathway cofactor biosynthesis; riboflavin biosynthesis; riboflavin from 2-hydroxy-3-oxobutyl phosphate and 5-amino-6-(D-ribitylamino)uracil: step 1/2. Its function is as follows. Catalyzes the formation of 6,7-dimethyl-8-ribityllumazine by condensation of 5-amino-6-(D-ribitylamino)uracil with 3,4-dihydroxy-2-butanone 4-phosphate. This is the penultimate step in the biosynthesis of riboflavin. This is 6,7-dimethyl-8-ribityllumazine synthase from Helicobacter acinonychis (strain Sheeba).